A 500-amino-acid polypeptide reads, in one-letter code: Na(+)/H(+) antiporter NhaB (500 aa).

Transmembrane regions (helical) follow at residues 34 to 54 (PLFFAVSPAAAGWCLVIEFIF), 62 to 82 (CYPLMPGGLLLVQALVLGMTT), 90 to 110 (LVHNFPVILLLMFMVAGIYFM), 129 to 149 (ALLGLLFCFLSAFLSAFLDAL), 150 to 170 (TVTAVIISAAVGFYSVYHRVA), 205 to 225 (LLMHGAVGTALGGVCTLVGEP), 241 to 261 (FFSKVAPVSMPVLAAGLVTCV), 311 to 331 (ILIVALALHVAEVGLIGLLVI), 350 to 370 (FKDAMPFTALLVVFFAVVAVI), 394 to 414 (MLFIANGLLSAISDNVFVATI), 449 to 469 (VATPNGQAAFLFLLTSAIAPL), and 477 to 497 (MVWMALPYTVVMGLLGWYAVS).

This sequence belongs to the NhaB Na(+)/H(+) (TC 2.A.34) antiporter family.

It is found in the cell inner membrane. The catalysed reaction is 2 Na(+)(in) + 3 H(+)(out) = 2 Na(+)(out) + 3 H(+)(in). In terms of biological role, na(+)/H(+) antiporter that extrudes sodium in exchange for external protons. This chain is Na(+)/H(+) antiporter NhaB, found in Pseudomonas fluorescens (strain ATCC BAA-477 / NRRL B-23932 / Pf-5).